Consider the following 212-residue polypeptide: Redox-sensing transcriptional repressor Rex (212 aa).

The H-T-H motif DNA-binding region spans 17-56 (LYARSLRYLLEEGVHSVSSQELGERINVTAAQIRKDLSYF). NAD(+) is bound at residue 91 to 96 (GIGLLG).

This sequence belongs to the transcriptional regulatory Rex family. Homodimer.

The protein resides in the cytoplasm. In terms of biological role, modulates transcription in response to changes in cellular NADH/NAD(+) redox state. The protein is Redox-sensing transcriptional repressor Rex of Chloroflexus aurantiacus (strain ATCC 29366 / DSM 635 / J-10-fl).